A 178-amino-acid chain; its full sequence is Acireductone dioxygenase (178 aa).

Fe(2+)-binding residues include H82, H84, E88, and H127. Positions 82, 84, 88, and 127 each coordinate Ni(2+). S157 carries the post-translational modification Phosphoserine.

This sequence belongs to the acireductone dioxygenase (ARD) family. The cofactor is Fe(2+). Ni(2+) serves as cofactor.

The protein resides in the cytoplasm. The protein localises to the nucleus. The catalysed reaction is 1,2-dihydroxy-5-(methylsulfanyl)pent-1-en-3-one + O2 = 4-methylsulfanyl-2-oxobutanoate + formate + 2 H(+). The enzyme catalyses 1,2-dihydroxy-5-(methylsulfanyl)pent-1-en-3-one + O2 = 3-(methylsulfanyl)propanoate + CO + formate + 2 H(+). It participates in amino-acid biosynthesis; L-methionine biosynthesis via salvage pathway; L-methionine from S-methyl-5-thio-alpha-D-ribose 1-phosphate: step 5/6. Its function is as follows. Catalyzes 2 different reactions between oxygen and the acireductone 1,2-dihydroxy-3-keto-5-methylthiopentene (DHK-MTPene) depending upon the metal bound in the active site. Fe-containing acireductone dioxygenase (Fe-ARD) produces formate and 2-keto-4-methylthiobutyrate (KMTB), the alpha-ketoacid precursor of methionine in the methionine recycle pathway. Ni-containing acireductone dioxygenase (Ni-ARD) produces methylthiopropionate, carbon monoxide and formate, and does not lie on the methionine recycle pathway. The chain is Acireductone dioxygenase (adi1) from Schizosaccharomyces pombe (strain 972 / ATCC 24843) (Fission yeast).